Consider the following 488-residue polypeptide: Tripartite motif-containing protein 6 (488 aa).

The RING-type zinc finger occupies 15–60 (CPICLELLTEPLSIDCGHSFCQVCIIGNSNNSVFGQGGRSSCPVCR). A B box-type zinc finger spans residues 92-133 (LEVIFCALHGEKLQLFCKEDGKLICWLCERSQEHRGHHTFLM). 4 residues coordinate Zn(2+): cysteine 97, histidine 100, cysteine 119, and histidine 125. Residues 132–223 (LMEEVAQEYQ…SIIEKAEGDL (92 aa)) are a coiled coil. A B30.2/SPRY domain is found at 282-488 (DLRKMLKVFR…VPMTLRRPTS (207 aa)).

It belongs to the TRIM/RBCC family. In terms of assembly, homotrimer. Forms heteromultimers (via B30.2/SPRY domain) with TRIM5. Interacts with MYC. Interacts (via SPRY domain) with IKBKE. Interacts with VAMP8; this interaction contributes to the activation of the type I interferon antiviral response. Interacts with DHX16.

Its subcellular location is the cytoplasm. The enzyme catalyses S-ubiquitinyl-[E2 ubiquitin-conjugating enzyme]-L-cysteine + [acceptor protein]-L-lysine = [E2 ubiquitin-conjugating enzyme]-L-cysteine + N(6)-ubiquitinyl-[acceptor protein]-L-lysine.. The protein operates within protein modification; protein ubiquitination. Functionally, E3 ubiquitin ligase that plays a crucial role in the activation of the IKBKE-dependent branch of the type I interferon signaling pathway. In concert with the ubiquitin-conjugating E2 enzyme UBE2K, synthesizes unanchored 'Lys-48'-linked polyubiquitin chains that promote the oligomerization and autophosphorylation of IKBKE leading to stimulation of an antiviral response. Also ubiquitinates MYC and inhibits its transcription activation activity, maintaining the pluripotency of embryonic stem cells. Promotes the association of unanchored 'Lys-48'-polyubiquitin chains with DHX16 leading to enhancement of RIGI-mediated innate antiviral immune response. The polypeptide is Tripartite motif-containing protein 6 (Trim6) (Mus musculus (Mouse)).